The primary structure comprises 344 residues: AA9 family lytic polysaccharide monooxygenase J (344 aa).

The N-terminal stretch at 1-20 (MKSSLLVVLTAGLAVRDAIA) is a signal peptide. The Cu(2+) site is built by His-21 and His-99. An intrachain disulfide couples Cys-58 to Cys-194. Positions 180 and 189 each coordinate O2. Tyr-191 provides a ligand contact to Cu(2+). The interval 272-301 (PGGKPASGGSDGNAPEVAEPSGGEGSPSAP) is disordered. Over residues 285–301 (APEVAEPSGGEGSPSAP) the composition is skewed to low complexity. One can recognise a CBM1 domain in the interval 304–341 (CEVAAYGQCGGDQYSGCTQCASGYTCKAVSPPYYSQCA).

It belongs to the polysaccharide monooxygenase AA9 family. Requires Cu(2+) as cofactor.

It localises to the secreted. It carries out the reaction [(1-&gt;4)-beta-D-glucosyl]n+m + reduced acceptor + O2 = 4-dehydro-beta-D-glucosyl-[(1-&gt;4)-beta-D-glucosyl]n-1 + [(1-&gt;4)-beta-D-glucosyl]m + acceptor + H2O.. Functionally, lytic polysaccharide monooxygenase (LPMO) that depolymerizes crystalline and amorphous polysaccharides via the oxidation of scissile alpha- or beta-(1-4)-glycosidic bonds, yielding C4 oxidation products. Catalysis by LPMOs requires the reduction of the active-site copper from Cu(II) to Cu(I) by a reducing agent and H(2)O(2) or O(2) as a cosubstrate. This is AA9 family lytic polysaccharide monooxygenase J (gh61-10) from Neurospora crassa (strain ATCC 24698 / 74-OR23-1A / CBS 708.71 / DSM 1257 / FGSC 987).